A 400-amino-acid chain; its full sequence is DNA primase large subunit PriL (400 aa).

Cys-247, Cys-356, Cys-367, and Cys-373 together coordinate [4Fe-4S] cluster.

Belongs to the eukaryotic-type primase large subunit family. Heterodimer of a small subunit (PriS) and a large subunit (PriL). [4Fe-4S] cluster serves as cofactor.

Regulatory subunit of DNA primase, an RNA polymerase that catalyzes the synthesis of short RNA molecules used as primers for DNA polymerase during DNA replication. Stabilizes and modulates the activity of the small subunit, increasing the rate of DNA synthesis, and conferring RNA synthesis capability. The DNA polymerase activity may enable DNA primase to also catalyze primer extension after primer synthesis. May also play a role in DNA repair. The protein is DNA primase large subunit PriL of Thermococcus kodakarensis (strain ATCC BAA-918 / JCM 12380 / KOD1) (Pyrococcus kodakaraensis (strain KOD1)).